The primary structure comprises 143 residues: Peptide methionine sulfoxide reductase B9 (143 aa).

The MsrB domain occupies 19–140; sequence DQDWRAILSP…NSVSLKFSEI (122 aa). Cys58, Cys61, Cys104, and Cys107 together coordinate Zn(2+). The cysteines at positions 76 and 129 are disulfide-linked. The Nucleophile role is filled by Cys129.

It belongs to the MsrB Met sulfoxide reductase family. Zn(2+) serves as cofactor.

The protein resides in the cytoplasm. The protein localises to the cytosol. The catalysed reaction is L-methionyl-[protein] + [thioredoxin]-disulfide + H2O = L-methionyl-(R)-S-oxide-[protein] + [thioredoxin]-dithiol. In terms of biological role, catalyzes the reduction of methionine sulfoxide (MetSO) to methionine in proteins. Plays a protective role against oxidative stress by restoring activity to proteins that have been inactivated by methionine oxidation. MSRB family specifically reduces the MetSO R-enantiomer. In Arabidopsis thaliana (Mouse-ear cress), this protein is Peptide methionine sulfoxide reductase B9 (MSRB9).